Consider the following 350-residue polypeptide: Protein RecA (350 aa).

65 to 72 (GPESSGKT) contributes to the ATP binding site.

Belongs to the RecA family.

It is found in the cytoplasm. Can catalyze the hydrolysis of ATP in the presence of single-stranded DNA, the ATP-dependent uptake of single-stranded DNA by duplex DNA, and the ATP-dependent hybridization of homologous single-stranded DNAs. It interacts with LexA causing its activation and leading to its autocatalytic cleavage. This Nautilia profundicola (strain ATCC BAA-1463 / DSM 18972 / AmH) protein is Protein RecA.